The sequence spans 148 residues: Oleosin 1 (148 aa).

Ala-2 carries the post-translational modification N-acetylalanine. Positions 2 to 28 (ADQHFQQPLHFQGSYGQQQPRSYQVAK) are polar. Residues 29-148 (AATAVTAGGS…HVPSGQQQSS (120 aa)) are hydrophobic. Helical transmembrane passes span 37–57 (GSLLVLSGLVLAGTVIALTIA) and 81–101 (GFLTSGGFGVAAVTVLSWIYK).

This sequence belongs to the oleosin family.

Its subcellular location is the lipid droplet. It is found in the membrane. May have a structural role to stabilize the lipid body during desiccation of the seed by preventing coalescence of the oil. Probably interacts with both lipid and phospholipid moieties of lipid bodies. May also provide recognition signals for specific lipase anchorage in lipolysis during seedling growth. The chain is Oleosin 1 (OLE1) from Prunus dulcis (Almond).